The chain runs to 56 residues: uncharacterized protein (56 aa).

Residues 15-56 form a disordered region; the sequence is SIGNISSGNINNSIGNSSSSGCDDVFNNSTNNNNNNNNNNNK.

This is an uncharacterized protein from Dictyostelium discoideum (Social amoeba).